A 431-amino-acid polypeptide reads, in one-letter code: Glutamate-1-semialdehyde 2,1-aminomutase (431 aa).

Lys-265 carries the post-translational modification N6-(pyridoxal phosphate)lysine.

The protein belongs to the class-III pyridoxal-phosphate-dependent aminotransferase family. HemL subfamily. Homodimer. Pyridoxal 5'-phosphate serves as cofactor.

It is found in the cytoplasm. It catalyses the reaction (S)-4-amino-5-oxopentanoate = 5-aminolevulinate. It participates in porphyrin-containing compound metabolism; protoporphyrin-IX biosynthesis; 5-aminolevulinate from L-glutamyl-tRNA(Glu): step 2/2. The protein is Glutamate-1-semialdehyde 2,1-aminomutase of Vibrio vulnificus (strain CMCP6).